The primary structure comprises 340 residues: Dihydroorotate dehydrogenase (quinone) (340 aa).

FMN-binding positions include 62-66 and Thr86; that span reads AGMDK. Lys66 is a binding site for substrate. Residue 111 to 115 coordinates substrate; it reads NRMGF. FMN is bound by residues Asn139 and Asn172. Asn172 contributes to the substrate binding site. Ser175 acts as the Nucleophile in catalysis. Asn177 is a binding site for substrate. 2 residues coordinate FMN: Lys217 and Thr245. 246–247 contributes to the substrate binding site; that stretch reads NT. FMN-binding positions include Gly268, Gly297, and 318–319; that span reads YS.

This sequence belongs to the dihydroorotate dehydrogenase family. Type 2 subfamily. As to quaternary structure, monomer. Requires FMN as cofactor.

It is found in the cell membrane. It carries out the reaction (S)-dihydroorotate + a quinone = orotate + a quinol. The protein operates within pyrimidine metabolism; UMP biosynthesis via de novo pathway; orotate from (S)-dihydroorotate (quinone route): step 1/1. Functionally, catalyzes the conversion of dihydroorotate to orotate with quinone as electron acceptor. The chain is Dihydroorotate dehydrogenase (quinone) from Shewanella woodyi (strain ATCC 51908 / MS32).